The sequence spans 152 residues: NADH-quinone oxidoreductase subunit I 1 (152 aa).

4Fe-4S ferredoxin-type domains are found at residues 53–83 (MKLG…MKSD) and 94–123 (VTYV…LGTG). [4Fe-4S] cluster is bound by residues cysteine 63, cysteine 66, cysteine 69, cysteine 73, cysteine 103, cysteine 106, cysteine 109, and cysteine 113.

The protein belongs to the complex I 23 kDa subunit family. As to quaternary structure, NDH-1 is composed of 14 different subunits. Subunits NuoA, H, J, K, L, M, N constitute the membrane sector of the complex. [4Fe-4S] cluster is required as a cofactor.

Its subcellular location is the cell inner membrane. The enzyme catalyses a quinone + NADH + 5 H(+)(in) = a quinol + NAD(+) + 4 H(+)(out). Functionally, NDH-1 shuttles electrons from NADH, via FMN and iron-sulfur (Fe-S) centers, to quinones in the respiratory chain. The immediate electron acceptor for the enzyme in this species is believed to be ubiquinone. Couples the redox reaction to proton translocation (for every two electrons transferred, four hydrogen ions are translocated across the cytoplasmic membrane), and thus conserves the redox energy in a proton gradient. The chain is NADH-quinone oxidoreductase subunit I 1 from Koribacter versatilis (strain Ellin345).